A 303-amino-acid polypeptide reads, in one-letter code: Heme A synthase (303 aa).

Residues 1-8 (MFGKKNLK) are Cytoplasmic-facing. A helical transmembrane segment spans residues 9-29 (WLGVVATLMMTFVQLGGALVT). The Extracellular segment spans residues 30–67 (KTGSADGCGSSWPLCHGALIPEFFPIDTIIELSHRAVS). An intrachain disulfide couples Cys-37 to Cys-44. Glu-60 is an active-site residue. His-63 serves as a coordination point for heme o. A helical transmembrane segment spans residues 68–88 (ALSLLMVLWLVITAWKHIGYI). The Cytoplasmic portion of the chain corresponds to 89–93 (KEIKP). A helical transmembrane segment spans residues 94–114 (LSIISVGFLLLQALIGAAAVI). Topologically, residues 115 to 125 (WQQNDYVLALH) are extracellular. Residue His-125 participates in heme o binding. A helical transmembrane segment spans residues 126–146 (FGISLISFSSVFLITLIIFSI). Residues 147-163 (DQKYEAAELYIKKPLRR) are Cytoplasmic-facing. Residues 164–184 (LTWLMAIIIYCGVYTGALVRH) traverse the membrane as a helical segment. Residues 185–215 (ADASLAYGGWPLPFHDLVPHSEQDWVQLTHR) lie on the Extracellular side of the membrane. Position 214 (His-214) interacts with heme b. The helical transmembrane segment at 216-236 (IMAFIVFTIIMITYIHAVKNY) threads the bilayer. Residues 237 to 244 (PNNRTVHY) lie on the Cytoplasmic side of the membrane. Residues 245–265 (GYTAAFILVILQVITGALSIM) form a helical membrane-spanning segment. Topologically, residues 266-270 (TNVNL) are extracellular. A helical membrane pass occupies residues 271 to 291 (IIALFHALFITYLFGMTTYFI). His-276 is a binding site for heme b. Topologically, residues 292-303 (MLMLRSVRSDKQ) are cytoplasmic.

The protein belongs to the COX15/CtaA family. Type 1 subfamily. In terms of assembly, interacts with CtaB. It depends on heme b as a cofactor.

The protein resides in the cell membrane. It carries out the reaction Fe(II)-heme o + 2 A + H2O = Fe(II)-heme a + 2 AH2. Its pathway is porphyrin-containing compound metabolism; heme A biosynthesis; heme A from heme O: step 1/1. In terms of biological role, catalyzes the conversion of heme O to heme A by two successive hydroxylations of the methyl group at C8. The first hydroxylation forms heme I, the second hydroxylation results in an unstable dihydroxymethyl group, which spontaneously dehydrates, resulting in the formyl group of heme A. This Staphylococcus aureus (strain bovine RF122 / ET3-1) protein is Heme A synthase.